A 360-amino-acid polypeptide reads, in one-letter code: Phosphoserine aminotransferase (360 aa).

Arg-41 is a binding site for L-glutamate. Pyridoxal 5'-phosphate contacts are provided by Trp-101, Thr-152, Asp-172, and Gln-195. Residue Lys-196 is modified to N6-(pyridoxal phosphate)lysine. Pyridoxal 5'-phosphate is bound at residue 237 to 238 (NT).

This sequence belongs to the class-V pyridoxal-phosphate-dependent aminotransferase family. SerC subfamily. In terms of assembly, homodimer. It depends on pyridoxal 5'-phosphate as a cofactor.

Its subcellular location is the cytoplasm. The catalysed reaction is O-phospho-L-serine + 2-oxoglutarate = 3-phosphooxypyruvate + L-glutamate. It catalyses the reaction 4-(phosphooxy)-L-threonine + 2-oxoglutarate = (R)-3-hydroxy-2-oxo-4-phosphooxybutanoate + L-glutamate. It functions in the pathway amino-acid biosynthesis; L-serine biosynthesis; L-serine from 3-phospho-D-glycerate: step 2/3. It participates in cofactor biosynthesis; pyridoxine 5'-phosphate biosynthesis; pyridoxine 5'-phosphate from D-erythrose 4-phosphate: step 3/5. In terms of biological role, catalyzes the reversible conversion of 3-phosphohydroxypyruvate to phosphoserine and of 3-hydroxy-2-oxo-4-phosphonooxybutanoate to phosphohydroxythreonine. In Burkholderia ambifaria (strain ATCC BAA-244 / DSM 16087 / CCUG 44356 / LMG 19182 / AMMD) (Burkholderia cepacia (strain AMMD)), this protein is Phosphoserine aminotransferase.